The sequence spans 340 residues: Insulin gene enhancer protein ISL-2B (340 aa).

2 LIM zinc-binding domains span residues 9–62 and 71–125; these read CVGC…CKRD and CAKC…RADH. The homeobox DNA-binding region spans 172-231; that stretch reads TTRVRTVLNEKQLHTLRTCYNANPRPDALMKEQLVEMTGLSPRVIRVWFQNKRCKDKKRT. A compositionally biased stretch (low complexity) spans 307–317; it reads ESGSMGNSSGS. The interval 307–340 is disordered; sequence ESGSMGNSSGSDVTSLSSQLPDTPNSMVPSPMDT. Over residues 318-340 the composition is skewed to polar residues; the sequence is DVTSLSSQLPDTPNSMVPSPMDT.

It localises to the nucleus. Binds to one of the cis-acting domain of the insulin gene enhancer. May be involved in subtype specialization of primary motoneurons. The sequence is that of Insulin gene enhancer protein ISL-2B (isl2b) from Oncorhynchus tshawytscha (Chinook salmon).